We begin with the raw amino-acid sequence, 379 residues long: Armadillo repeat-containing X-linked protein 3 (379 aa).

At 1-6 (MGYARK) the chain is on the mitochondrial intermembrane side. Mitochondrion outer membrane (MOM)-targeting sequence regions lie at residues 1 to 6 (MGYARK) and 26 to 37 (RLTRGRKQNKEK). A helical; Signal-anchor membrane pass occupies residues 7-29 (VGWVTAGLVIGAGACYCIYRLTR). The Cytoplasmic segment spans residues 30–379 (GRKQNKEKMA…AEHMFPKSQE (350 aa)). 3 positions are modified to phosphoserine: Ser61, Ser67, and Ser72. The segment at 89–98 (RARARARARA) is nuclear localization signal. A compositionally biased stretch (basic residues) spans 95–106 (RARATRARRAVQ). Residues 95–116 (RARATRARRAVQKRASPNSDDT) are disordered. Ser110 carries the phosphoserine modification. ARM repeat units follow at residues 111-151 (PNSD…NNAA), 153-192 (AFNRDIIRDLGGLPIVAKILNTRDPIVKEKALIVLNNLSV), and 233-272 (VTNEYQHMLANSISDFFRLFSAGNEETKLQVLKLLLNLAE).

Belongs to the eutherian X-chromosome-specific Armcx family. In terms of assembly, interacts (via ARM domain) with MIRO1, MIRO2 and TRAK2. The interaction with Miro is calcium-dependent. Interacts with SOX10.

The protein resides in the mitochondrion outer membrane. Its subcellular location is the cytoplasm. It localises to the nucleus. Regulates mitochondrial aggregation and transport in axons in living neurons. May link mitochondria to the TRAK2-kinesin motor complex via its interaction with Miro and TRAK2. Mitochondrial distribution and dynamics is regulated through ARMCX3 protein degradation, which is promoted by PCK and negatively regulated by WNT1. Enhances the SOX10-mediated transactivation of the neuronal acetylcholine receptor subunit alpha-3 and beta-4 subunit gene promoters. The protein is Armadillo repeat-containing X-linked protein 3 (ARMCX3) of Homo sapiens (Human).